The chain runs to 535 residues: Methylmalonate-semialdehyde/malonate-semialdehyde dehydrogenase [acylating], mitochondrial (535 aa).

Residues 1–33 constitute a mitochondrion transit peptide; that stretch reads MAALLAAAAVRARILQVSSKVKSSPTWYSASSF. N6-acetyllysine; alternate occurs at positions 47, 52, 55, and 76. N6-succinyllysine; alternate is present on residues Lys-47, Lys-52, Lys-55, and Lys-76. N6-acetyllysine is present on Lys-87. 2 positions are modified to N6-acetyllysine; alternate: Lys-117 and Lys-129. Residues Lys-117 and Lys-129 each carry the N6-succinyllysine; alternate modification. Positions 183, 185, 209, 212, 213, and 262 each coordinate NAD(+). Residue Ser-262 is modified to Phosphoserine. Lys-298 carries the post-translational modification N6-acetyllysine. Cys-317 (nucleophile) is an active-site residue. N6-acetyllysine occurs at positions 330 and 331. Lys-364 and Lys-376 each carry N6-acetyllysine; alternate. 2 positions are modified to N6-succinyllysine; alternate: Lys-364 and Lys-376. Residue Ser-380 is modified to Phosphoserine. Lys-391 is modified (N6-succinyllysine). Glu-417 is an NAD(+) binding site. Lys-500 is modified (N6-acetyllysine). Residue Lys-517 is modified to N6-succinyllysine.

The protein belongs to the aldehyde dehydrogenase family. Homotetramer.

It is found in the mitochondrion. It catalyses the reaction 3-oxopropanoate + NAD(+) + CoA + H2O = hydrogencarbonate + acetyl-CoA + NADH + H(+). It carries out the reaction 2-methyl-3-oxopropanoate + NAD(+) + CoA + H2O = propanoyl-CoA + hydrogencarbonate + NADH + H(+). The enzyme catalyses (R)-2-methyl-3-oxopropanoate + NAD(+) + CoA + H2O = propanoyl-CoA + hydrogencarbonate + NADH + H(+). The catalysed reaction is (S)-2-methyl-3-oxopropanoate + NAD(+) + CoA + H2O = propanoyl-CoA + hydrogencarbonate + NADH + H(+). Functionally, malonate and methylmalonate semialdehyde dehydrogenase involved in the catabolism of valine, thymine, and compounds catabolized by way of beta-alanine, including uracil and cytidine. The chain is Methylmalonate-semialdehyde/malonate-semialdehyde dehydrogenase [acylating], mitochondrial from Homo sapiens (Human).